The primary structure comprises 282 residues: MASSFLPAGAITGDSGGELSSGDDSGEVEFPHSPEIEETSCLAELFEKAAAHLQGLIQVASREQLLYLYARYKQVKVGNCNTPKPSFFDFEGKQKWEAWKALGDSSPSQAMQEYIAVVKKLDPGWNPQIPEKKGKEANTGFGGPVISSLYHEETIREEDKNIFDYCRENNIDHITKAIKSKNVDVNVKDEEGRALLHWACDRGHKELVTVLLQHRADINCQDNEGQTALHYASACEFLDIVELLLQSGADPTLRDQDGCLPEEVTGCKTVSLVLQRHTTGKA.

Positions 1–31 are disordered; sequence MASSFLPAGAITGDSGGELSSGDDSGEVEFP. Residues 42 to 127 enclose the ACB domain; sequence LAELFEKAAA…VKKLDPGWNP (86 aa). Residues 69–73 and K95 contribute to the an acyl-CoA site; that span reads YARYK. Phosphoserine is present on S106. Y114 lines the an acyl-CoA pocket. ANK repeat units follow at residues 191 to 220 and 224 to 253; these read EGRALLHWACDRGHKELVTVLLQHRADINC and EGQTALHYASACEFLDIVELLLQSGADPTL.

In terms of assembly, monomer. In terms of tissue distribution, detected in placenta and spleen (at protein level). Detected in placenta, umbilical cord blood, CD34-positive hematopoietic progenitor cells and bone marrow.

The protein localises to the cytoplasm. Its subcellular location is the nucleus. Its function is as follows. Binds long-chain acyl-coenzyme A molecules with a strong preference for unsaturated C18:1-CoA, lower affinity for unsaturated C20:4-CoA, and very weak affinity for saturated C16:0-CoA. Does not bind fatty acids. Plays a role in protein N-myristoylation. In Homo sapiens (Human), this protein is Acyl-CoA-binding domain-containing protein 6 (ACBD6).